A 339-amino-acid chain; its full sequence is Uroporphyrinogen decarboxylase (339 aa).

Substrate-binding positions include 21-25 (RQAGR), Asp-71, Tyr-147, Ser-202, and His-315.

Belongs to the uroporphyrinogen decarboxylase family. As to quaternary structure, homodimer.

The protein localises to the cytoplasm. It catalyses the reaction uroporphyrinogen III + 4 H(+) = coproporphyrinogen III + 4 CO2. It functions in the pathway porphyrin-containing compound metabolism; protoporphyrin-IX biosynthesis; coproporphyrinogen-III from 5-aminolevulinate: step 4/4. Catalyzes the decarboxylation of four acetate groups of uroporphyrinogen-III to yield coproporphyrinogen-III. The protein is Uroporphyrinogen decarboxylase of Helicobacter acinonychis (strain Sheeba).